The chain runs to 288 residues: Sulfur carrier protein FdhD (288 aa).

The active-site Cysteine persulfide intermediate is Cys122. Mo-bis(molybdopterin guanine dinucleotide) is bound at residue 268–273 (FVRGER).

It belongs to the FdhD family.

The protein localises to the cytoplasm. Required for formate dehydrogenase (FDH) activity. Acts as a sulfur carrier protein that transfers sulfur from IscS to the molybdenum cofactor prior to its insertion into FDH. The sequence is that of Sulfur carrier protein FdhD from Anaeromyxobacter sp. (strain K).